The primary structure comprises 301 residues: Sulfate adenylyltransferase subunit 2 (301 aa).

Residues Arg279–Phe301 are disordered.

The protein belongs to the PAPS reductase family. CysD subfamily. As to quaternary structure, heterodimer composed of CysD, the smaller subunit, and CysN.

The catalysed reaction is sulfate + ATP + H(+) = adenosine 5'-phosphosulfate + diphosphate. The protein operates within sulfur metabolism; hydrogen sulfide biosynthesis; sulfite from sulfate: step 1/3. With CysN forms the ATP sulfurylase (ATPS) that catalyzes the adenylation of sulfate producing adenosine 5'-phosphosulfate (APS) and diphosphate, the first enzymatic step in sulfur assimilation pathway. APS synthesis involves the formation of a high-energy phosphoric-sulfuric acid anhydride bond driven by GTP hydrolysis by CysN coupled to ATP hydrolysis by CysD. The sequence is that of Sulfate adenylyltransferase subunit 2 from Marinomonas sp. (strain MWYL1).